A 498-amino-acid polypeptide reads, in one-letter code: NADH-quinone oxidoreductase subunit N 2 (498 aa).

A run of 14 helical transmembrane segments spans residues Val19–Phe39, Ile47–Trp67, Tyr83–Leu103, Ser114–Ala134, Leu136–Phe156, Leu171–Ala191, Ile215–Ala235, Pro249–Leu269, Ile282–Ala302, Ile317–Ala337, Val345–Ala365, Leu389–Phe409, Trp420–Phe440, and Ala468–Ile488.

This sequence belongs to the complex I subunit 2 family. NDH-1 is composed of 14 different subunits. Subunits NuoA, H, J, K, L, M, N constitute the membrane sector of the complex.

It is found in the cell membrane. The enzyme catalyses a quinone + NADH + 5 H(+)(in) = a quinol + NAD(+) + 4 H(+)(out). NDH-1 shuttles electrons from NADH, via FMN and iron-sulfur (Fe-S) centers, to quinones in the respiratory chain. The immediate electron acceptor for the enzyme in this species is believed to be ubiquinone. Couples the redox reaction to proton translocation (for every two electrons transferred, four hydrogen ions are translocated across the cytoplasmic membrane), and thus conserves the redox energy in a proton gradient. The chain is NADH-quinone oxidoreductase subunit N 2 from Roseiflexus castenholzii (strain DSM 13941 / HLO8).